Reading from the N-terminus, the 271-residue chain is Phosphate import ATP-binding protein PstB 1 (271 aa).

The 243-residue stretch at 24–266 (MIGKDVSVYY…PDDPRTQDYI (243 aa)) folds into the ABC transporter domain. 56-63 (GPSGCGKS) lines the ATP pocket.

Belongs to the ABC transporter superfamily. Phosphate importer (TC 3.A.1.7) family. As to quaternary structure, the complex is composed of two ATP-binding proteins (PstB), two transmembrane proteins (PstC and PstA) and a solute-binding protein (PstS).

The protein localises to the cell inner membrane. It carries out the reaction phosphate(out) + ATP + H2O = ADP + 2 phosphate(in) + H(+). Functionally, part of the ABC transporter complex PstSACB involved in phosphate import. Responsible for energy coupling to the transport system. The protein is Phosphate import ATP-binding protein PstB 1 of Rhizobium johnstonii (strain DSM 114642 / LMG 32736 / 3841) (Rhizobium leguminosarum bv. viciae).